The chain runs to 295 residues: Iron-sulfur cluster carrier protein (295 aa).

38–45 provides a ligand contact to ATP; sequence GKGGVGKS.

Belongs to the Mrp/NBP35 ATP-binding proteins family. In terms of assembly, homodimer.

Its function is as follows. Binds and transfers iron-sulfur (Fe-S) clusters to target apoproteins. Can hydrolyze ATP. The protein is Iron-sulfur cluster carrier protein of Pyrococcus horikoshii (strain ATCC 700860 / DSM 12428 / JCM 9974 / NBRC 100139 / OT-3).